We begin with the raw amino-acid sequence, 306 residues long: Uracil-DNA glycosylase (306 aa).

Residues Met1–Glu25 form an interaction with FAM72A region. The disordered stretch occupies residues Phe11–Gly31. A Phosphoserine modification is found at Ser12. The Important for nuclear sorting motif lies at Gly17–Arg19. Phosphoserine occurs at positions 23, 43, and 57. The interaction with RPA2 stretch occupies residues Arg66 to Arg81. Residue Gln146 coordinates uracil. Asp147 functions as the Proton acceptor in the catalytic mechanism. His150 provides a ligand contact to dsDNA. Uracil is bound at residue Phe160. Ser171 contributes to the dsDNA binding site. Asn206 contributes to the uracil binding site. Ser249, His270, Ser272, and Arg278 together coordinate dsDNA. Residue His270 participates in uracil binding. Position 288 is an N6-acetyllysine (Lys288).

The protein belongs to the uracil-DNA glycosylase (UDG) superfamily. UNG family. In terms of assembly, interacts with RPA2 subunit of the RPA trimer; this interaction mediates UNG2 recruitment to RPA-coated single-stranded DNA at stalled replication forks. Interacts with PCNA; this interaction mediates UNG2 recruitment to S-phase replication foci. Interacts (via N-terminus) with FAM72A. Post-translationally, processed by cleavage of a transit peptide.

Its subcellular location is the mitochondrion. It is found in the nucleus. It catalyses the reaction Hydrolyzes single-stranded DNA or mismatched double-stranded DNA and polynucleotides, releasing free uracil.. It carries out the reaction a 2'-deoxyuridine in single-stranded DNA + H2O = a 2'-deoxyribose 5'-monophosphate in single-stranded DNA + uracil. The enzyme catalyses a 2'-deoxyuridine in double-stranded DNA + H2O = a 2'-deoxyribose 5'-monophosphate in double-stranded DNA + uracil. Its function is as follows. Uracil-DNA glycosylase that hydrolyzes the N-glycosidic bond between uracil and deoxyribose in single- and double-stranded DNA (ssDNA and dsDNA) to release a free uracil residue and form an abasic (apurinic/apyrimidinic; AP) site. Excises uracil residues arising as a result of misincorporation of dUMP residues by DNA polymerase during replication or due to spontaneous or enzymatic deamination of cytosine. Mediates error-free base excision repair (BER) of uracil at replication forks. According to the model, it is recruited by PCNA to S-phase replication forks to remove misincorporated uracil at U:A base mispairs in nascent DNA strands. Via trimeric RPA it is recruited to ssDNA stretches ahead of the polymerase to allow detection and excision of deaminated cytosines prior to replication. The resultant AP sites temporarily stall replication, allowing time to repair the lesion. Mediates mutagenic uracil processing involved in antibody affinity maturation. Processes AICDA-induced U:G base mispairs at variable Ig regions leading to the generation of transversion mutations. Additionally, it operates at switch sites of Ig constant regions where it mediates Ig isotype class switch recombination. Excises AICDA-induced uracil residues forming AP sites that are subsequently nicked by APEX1 endonuclease. The accumulation of staggered nicks in opposite strands results in double strand DNA breaks that are finally resolved via non-homologous end joining repair pathway. The protein is Uracil-DNA glycosylase (Ung) of Mus musculus (Mouse).